A 467-amino-acid chain; its full sequence is uncharacterized protein (467 aa).

Positions 1–60 (MVRVSRGCQSCVDAKLQSTPSPSPSKSPSPTESPEQCLQKRQSGEQVVLPSRPFPRTSPR) are disordered.

In terms of biological role, involved in osmoadaptation. This is an uncharacterized protein from Emericella nidulans (strain FGSC A4 / ATCC 38163 / CBS 112.46 / NRRL 194 / M139) (Aspergillus nidulans).